The primary structure comprises 203 residues: Dephospho-CoA kinase (203 aa).

The DPCK domain occupies 3 to 201 (SVGLTGGIGS…QRYLGYAAAA (199 aa)). 11 to 16 (GSGKTT) contacts ATP.

The protein belongs to the CoaE family.

It is found in the cytoplasm. The enzyme catalyses 3'-dephospho-CoA + ATP = ADP + CoA + H(+). Its pathway is cofactor biosynthesis; coenzyme A biosynthesis; CoA from (R)-pantothenate: step 5/5. Catalyzes the phosphorylation of the 3'-hydroxyl group of dephosphocoenzyme A to form coenzyme A. The polypeptide is Dephospho-CoA kinase (Burkholderia thailandensis (strain ATCC 700388 / DSM 13276 / CCUG 48851 / CIP 106301 / E264)).